A 333-amino-acid chain; its full sequence is Homeobox protein HMX1 (333 aa).

3 disordered regions span residues 1–74, 86–109, and 139–204; these read MAQD…STSA, GTEG…APRC, and CASP…KKKT. Over residues 17–30 the composition is skewed to polar residues; the sequence is DYTQGNTDRSTAAA. Gly residues predominate over residues 87–105; that stretch reads TEGGGGTRRAAAGGGGGRG. The span at 144 to 158 shows a compositional bias: basic and acidic residues; the sequence is TSDRDSPELPEDTER. Over residues 159-176 the composition is skewed to gly residues; the sequence is AGGGGRAAARGPAGGRQS. Residues 181–192 are compositionally biased toward acidic residues; the sequence is EEEEERGEEAGE. Residues 201-260 constitute a DNA-binding region (homeobox); sequence KKKTRTVFSRSQVFQLESTFDVKRYLSSSERAGLAASLHLTETQVKIWFQNRRNKWKRQL. The short motif at 261–271 is the HMX family specific domain 1 element; the sequence is AADLEAANLSH.

It belongs to the HMX homeobox family.

It localises to the nucleus. Functionally, DNA-binding protein that binds to the 5'-CAAG-3' core sequence. May function as a transcriptional repressor. Seems to act as a transcriptional antagonist of NKX2-5. May play an important role in the development of craniofacial structures such as the eye and ear. The protein is Homeobox protein HMX1 (HMX1) of Gallus gallus (Chicken).